A 134-amino-acid polypeptide reads, in one-letter code: ATP synthase epsilon chain (134 aa).

It belongs to the ATPase epsilon chain family. In terms of assembly, F-type ATPases have 2 components, CF(1) - the catalytic core - and CF(0) - the membrane proton channel. CF(1) has five subunits: alpha(3), beta(3), gamma(1), delta(1), epsilon(1). CF(0) has three main subunits: a, b and c.

It localises to the cell membrane. In terms of biological role, produces ATP from ADP in the presence of a proton gradient across the membrane. The chain is ATP synthase epsilon chain from Listeria innocua serovar 6a (strain ATCC BAA-680 / CLIP 11262).